A 485-amino-acid chain; its full sequence is Lysine--tRNA ligase (485 aa).

Mg(2+) is bound by residues Glu-391 and Glu-398.

The protein belongs to the class-II aminoacyl-tRNA synthetase family. Homodimer. Requires Mg(2+) as cofactor.

The protein localises to the cytoplasm. The catalysed reaction is tRNA(Lys) + L-lysine + ATP = L-lysyl-tRNA(Lys) + AMP + diphosphate. This Blochmanniella floridana protein is Lysine--tRNA ligase.